Consider the following 459-residue polypeptide: uncharacterized protein (459 aa).

A TRAM domain is found at 7-65 (PVNKNEIYTLTFEDLTHEGNGVAKIEGYPLFVPEVLPDEQAKVKVVKVNKNFGFGKLLE). [4Fe-4S] cluster contacts are provided by Cys78, Cys82, Cys85, and Cys164. S-adenosyl-L-methionine is bound by residues Gln288, Tyr317, Glu338, and Asp386. Cys413 (nucleophile) is an active-site residue.

The protein belongs to the class I-like SAM-binding methyltransferase superfamily. RNA M5U methyltransferase family.

This is an uncharacterized protein from Oceanobacillus iheyensis (strain DSM 14371 / CIP 107618 / JCM 11309 / KCTC 3954 / HTE831).